A 183-amino-acid polypeptide reads, in one-letter code: Endoribonuclease YbeY (183 aa).

Positions 140, 144, and 150 each coordinate Zn(2+).

The protein belongs to the endoribonuclease YbeY family. Requires Zn(2+) as cofactor.

It is found in the cytoplasm. In terms of biological role, single strand-specific metallo-endoribonuclease involved in late-stage 70S ribosome quality control and in maturation of the 3' terminus of the 16S rRNA. The polypeptide is Endoribonuclease YbeY (Bradyrhizobium diazoefficiens (strain JCM 10833 / BCRC 13528 / IAM 13628 / NBRC 14792 / USDA 110)).